The primary structure comprises 205 residues: Ribosomal RNA small subunit methyltransferase G (205 aa).

Residues Gly-71, Phe-76, 120-121 (IE), and Arg-134 contribute to the S-adenosyl-L-methionine site.

Belongs to the methyltransferase superfamily. RNA methyltransferase RsmG family.

It is found in the cytoplasm. It catalyses the reaction guanosine(527) in 16S rRNA + S-adenosyl-L-methionine = N(7)-methylguanosine(527) in 16S rRNA + S-adenosyl-L-homocysteine. In terms of biological role, specifically methylates the N7 position of guanine in position 527 of 16S rRNA. The protein is Ribosomal RNA small subunit methyltransferase G of Paramagnetospirillum magneticum (strain ATCC 700264 / AMB-1) (Magnetospirillum magneticum).